The following is a 223-amino-acid chain: Deoxyribose-phosphate aldolase (223 aa).

D89 acts as the Proton donor/acceptor in catalysis. K152 (schiff-base intermediate with acetaldehyde) is an active-site residue. The Proton donor/acceptor role is filled by K181.

The protein belongs to the DeoC/FbaB aldolase family. DeoC type 1 subfamily.

The protein localises to the cytoplasm. It carries out the reaction 2-deoxy-D-ribose 5-phosphate = D-glyceraldehyde 3-phosphate + acetaldehyde. The protein operates within carbohydrate degradation; 2-deoxy-D-ribose 1-phosphate degradation; D-glyceraldehyde 3-phosphate and acetaldehyde from 2-deoxy-alpha-D-ribose 1-phosphate: step 2/2. Functionally, catalyzes a reversible aldol reaction between acetaldehyde and D-glyceraldehyde 3-phosphate to generate 2-deoxy-D-ribose 5-phosphate. This Listeria monocytogenes serovar 1/2a (strain ATCC BAA-679 / EGD-e) protein is Deoxyribose-phosphate aldolase.